The sequence spans 257 residues: tRNA pseudouridine synthase A (257 aa).

The Nucleophile role is filled by D53. A substrate-binding site is contributed by Y111.

Belongs to the tRNA pseudouridine synthase TruA family. As to quaternary structure, homodimer.

The enzyme catalyses uridine(38/39/40) in tRNA = pseudouridine(38/39/40) in tRNA. In terms of biological role, formation of pseudouridine at positions 38, 39 and 40 in the anticodon stem and loop of transfer RNAs. The polypeptide is tRNA pseudouridine synthase A (Xanthomonas oryzae pv. oryzae (strain MAFF 311018)).